Here is a 290-residue protein sequence, read N- to C-terminus: 4-hydroxy-tetrahydrodipicolinate synthase (290 aa).

Residue Thr44 participates in pyruvate binding. Tyr132 serves as the catalytic Proton donor/acceptor. Lys160 (schiff-base intermediate with substrate) is an active-site residue. Position 202 (Ile202) interacts with pyruvate.

Belongs to the DapA family. As to quaternary structure, homotetramer; dimer of dimers.

Its subcellular location is the cytoplasm. It catalyses the reaction L-aspartate 4-semialdehyde + pyruvate = (2S,4S)-4-hydroxy-2,3,4,5-tetrahydrodipicolinate + H2O + H(+). It functions in the pathway amino-acid biosynthesis; L-lysine biosynthesis via DAP pathway; (S)-tetrahydrodipicolinate from L-aspartate: step 3/4. In terms of biological role, catalyzes the condensation of (S)-aspartate-beta-semialdehyde [(S)-ASA] and pyruvate to 4-hydroxy-tetrahydrodipicolinate (HTPA). The sequence is that of 4-hydroxy-tetrahydrodipicolinate synthase from Legionella pneumophila (strain Corby).